The primary structure comprises 197 residues: Phospholipid hydroperoxide glutathione peroxidase (197 aa).

Ser40 bears the Phosphoserine mark. Sec73 is a catalytic residue. Sec73 is a non-standard amino acid (selenocysteine).

The protein belongs to the glutathione peroxidase family. Monomer. Has a tendency to form higher mass oligomers. Interacts with FUNDC1; this interaction promotes GPX4 recruitment into mitochondria through TOM/TIM complex where it is degraded by mitophagy. As to expression, expressed very intensively in the testis and weakly in lung, heart, and cerebellum.

The protein resides in the mitochondrion. The protein localises to the cytoplasm. The enzyme catalyses a hydroperoxy polyunsaturated fatty acid + 2 glutathione = a hydroxy polyunsaturated fatty acid + glutathione disulfide + H2O. It carries out the reaction 2 glutathione + H2O2 = glutathione disulfide + 2 H2O. The catalysed reaction is tert-butyl hydroperoxide + 2 glutathione = tert-butanol + glutathione disulfide + H2O. It catalyses the reaction cumene hydroperoxide + 2 glutathione = 2-phenylpropan-2-ol + glutathione disulfide + H2O. The enzyme catalyses (9S)-hydroperoxy-(10E,12Z)-octadecadienoate + 2 glutathione = (9S)-hydroxy-(10E,12Z)-octadecadienoate + glutathione disulfide + H2O. It carries out the reaction (13S)-hydroperoxy-(9Z,11E)-octadecadienoate + 2 glutathione = (13S)-hydroxy-(9Z,11E)-octadecadienoate + glutathione disulfide + H2O. The catalysed reaction is (5S)-hydroperoxy-(6E,8Z,11Z,14Z)-eicosatetraenoate + 2 glutathione = (5S)-hydroxy-(6E,8Z,11Z,14Z)-eicosatetraenoate + glutathione disulfide + H2O. It catalyses the reaction (12R)-hydroperoxy-(5Z,8Z,10E,14Z)-eicosatetraenoate + 2 glutathione = (12R)-hydroxy-(5Z,8Z,10E,14Z)-eicosatetraenoate + glutathione disulfide + H2O. The enzyme catalyses (12S)-hydroperoxy-(5Z,8Z,10E,14Z)-eicosatetraenoate + 2 glutathione = (12S)-hydroxy-(5Z,8Z,10E,14Z)-eicosatetraenoate + glutathione disulfide + H2O. It carries out the reaction (15S)-hydroperoxy-(5Z,8Z,11Z,13E)-eicosatetraenoate + 2 glutathione = (15S)-hydroxy-(5Z,8Z,11Z,13E)-eicosatetraenoate + glutathione disulfide + H2O. The catalysed reaction is (5S)-hydroperoxy-(6E,8Z,11Z,14Z,17Z)-eicosapentaenoate + 2 glutathione = (5S)-hydroxy-(6E,8Z,11Z,14Z,17Z)-eicosapentaenoate + glutathione disulfide + H2O. It catalyses the reaction (12S)-hydroperoxy-(5Z,8Z,10E,14Z,17Z)-eicosapentaenoate + 2 glutathione = (12S)-hydroxy-(5Z,8Z,10E,14Z,17Z)-eicosapentaenoate + glutathione disulfide + H2O. The enzyme catalyses (15S)-hydroperoxy-(5Z,8Z,11Z,13E,17Z)-eicosapentaenoate + 2 glutathione = (15S)-hydroxy-(5Z,8Z,11Z,13E,17Z)-eicosapentaenoate + glutathione disulfide + H2O. It carries out the reaction (15S)-hydroperoxy-(11Z,13E)-eicosadienoate + 2 glutathione = (15S)-hydroxy-(11Z,13E)-eicosadienoate + glutathione disulfide + H2O. The catalysed reaction is (17S)-hydroperoxy-(4Z,7Z,10Z,13Z,15E,19Z)-docosahexaenoate + 2 glutathione = (17S)-hydroxy-(4Z,7Z,10Z,13Z,15E,19Z)-docosahexaenoate + glutathione disulfide + H2O. It catalyses the reaction a hydroperoxy-1,2-diacyl-glycero-3-phosphocholine + 2 glutathione = a hydroxy-1,2-diacyl-glycero-3-phosphocholine + glutathione disulfide + H2O. In terms of biological role, essential antioxidant peroxidase that directly reduces phospholipid hydroperoxide even if they are incorporated in membranes and lipoproteins. Can also reduce fatty acid hydroperoxide, cholesterol hydroperoxide and thymine hydroperoxide. Plays a key role in protecting cells from oxidative damage by preventing membrane lipid peroxidation. Required to prevent cells from ferroptosis, a non-apoptotic cell death resulting from an iron-dependent accumulation of lipid reactive oxygen species. The presence of selenocysteine (Sec) versus Cys at the active site is essential for life: it provides resistance to overoxidation and prevents cells against ferroptosis. The presence of Sec at the active site is also essential for the survival of a specific type of parvalbumin-positive interneurons, thereby preventing against fatal epileptic seizures. May be required to protect cells from the toxicity of ingested lipid hydroperoxides. Required for normal sperm development and male fertility. Essential for maturation and survival of photoreceptor cells. Plays a role in a primary T-cell response to viral and parasitic infection by protecting T-cells from ferroptosis and by supporting T-cell expansion. Plays a role of glutathione peroxidase in platelets in the arachidonic acid metabolism. Reduces hydroperoxy ester lipids formed by a 15-lipoxygenase that may play a role as down-regulator of the cellular 15-lipoxygenase pathway. Can also reduce small soluble hydroperoxides such as H2O2, cumene hydroperoxide and tert-butyl hydroperoxide. The protein is Phospholipid hydroperoxide glutathione peroxidase of Macaca fuscata fuscata (Japanese macaque).